A 182-amino-acid chain; its full sequence is UPF0398 protein lwe1908 (182 aa).

This sequence belongs to the UPF0398 family.

The protein is UPF0398 protein lwe1908 of Listeria welshimeri serovar 6b (strain ATCC 35897 / DSM 20650 / CCUG 15529 / CIP 8149 / NCTC 11857 / SLCC 5334 / V8).